Consider the following 289-residue polypeptide: UDP-3-O-acyl-N-acetylglucosamine deacetylase (289 aa).

3 residues coordinate Zn(2+): His79, His236, and Asp240. His263 (proton donor) is an active-site residue.

This sequence belongs to the LpxC family. It depends on Zn(2+) as a cofactor.

The catalysed reaction is a UDP-3-O-[(3R)-3-hydroxyacyl]-N-acetyl-alpha-D-glucosamine + H2O = a UDP-3-O-[(3R)-3-hydroxyacyl]-alpha-D-glucosamine + acetate. Its pathway is glycolipid biosynthesis; lipid IV(A) biosynthesis; lipid IV(A) from (3R)-3-hydroxytetradecanoyl-[acyl-carrier-protein] and UDP-N-acetyl-alpha-D-glucosamine: step 2/6. Its function is as follows. Catalyzes the hydrolysis of UDP-3-O-myristoyl-N-acetylglucosamine to form UDP-3-O-myristoylglucosamine and acetate, the committed step in lipid A biosynthesis. The protein is UDP-3-O-acyl-N-acetylglucosamine deacetylase of Rickettsia typhi (strain ATCC VR-144 / Wilmington).